The sequence spans 35 residues: Augerpeptide hheTx4 (35 aa).

In terms of processing, contains 4 disulfide bonds. In terms of tissue distribution, expressed by the venom duct.

It localises to the secreted. The protein is Augerpeptide hheTx4 of Hastula hectica (Sea snail).